A 488-amino-acid polypeptide reads, in one-letter code: Proline--tRNA ligase (488 aa).

It belongs to the class-II aminoacyl-tRNA synthetase family. ProS type 3 subfamily. Homodimer.

Its subcellular location is the cytoplasm. It carries out the reaction tRNA(Pro) + L-proline + ATP = L-prolyl-tRNA(Pro) + AMP + diphosphate. Catalyzes the attachment of proline to tRNA(Pro) in a two-step reaction: proline is first activated by ATP to form Pro-AMP and then transferred to the acceptor end of tRNA(Pro). In Borreliella afzelii (strain PKo) (Borrelia afzelii), this protein is Proline--tRNA ligase.